Reading from the N-terminus, the 225-residue chain is MKHLFKLDPAKNLPMNDLTKLVHSGTDGFIIGGTDNVQIEAVQKLYELLGETDLPIFLEISNESMILPEADHFLIPVVLNTENSKWTHGLHQELIKEMGAFIPWKRVTAEGYVILNKDAKVAHLTEAKTDLTDEDIVAYARLAENIFHLPIFYVEYSGMYGDPEVVRKAGAALSNTKFWYGGGIRSKEQAAEMAKYADTIIVGNIIYEDLEKALETATIFRKKTV.

Lys6 lines the sn-glycerol 1-phosphate pocket. Positions 8 and 34 each coordinate Mg(2+). Residues 153–158, Gly183, and 203–204 contribute to the sn-glycerol 1-phosphate site; these read YVEYSG and GN.

The protein belongs to the GGGP/HepGP synthase family. Group I subfamily. In terms of assembly, homodimer. The cofactor is Mg(2+).

The catalysed reaction is sn-glycerol 1-phosphate + all-trans-heptaprenyl diphosphate = 3-heptaprenyl-sn-glycero-1-phosphate + diphosphate. It participates in membrane lipid metabolism; glycerophospholipid metabolism. Prenyltransferase that catalyzes in vivo the transfer of the heptaprenyl moiety of heptaprenyl pyrophosphate (HepPP; 35 carbon atoms) to the C3 hydroxyl of sn-glycerol-1-phosphate (G1P), producing heptaprenylglyceryl phosphate (HepGP). This reaction is an ether-bond-formation step in the biosynthesis of archaea-type G1P-based membrane lipids found in Bacillales. The protein is Heptaprenylglyceryl phosphate synthase of Listeria monocytogenes serotype 4a (strain HCC23).